Here is a 471-residue protein sequence, read N- to C-terminus: (13S,14R)-1,13-dihydroxy-N-methylcanadine 13-O-acetyltransferase AT1 (471 aa).

It belongs to the plant acyltransferase family.

The enzyme catalyses (13S,14R)-1,13-dihydroxy-N-methylcanadine + acetyl-CoA = (13S,14R)-13-O-acetyl-1-hydroxy-N-methylcanadine + CoA. Its pathway is alkaloid biosynthesis. Its function is as follows. Acetyltransferase involved in the biosynthesis of the benzylisoquinoline alkaloid noscapine. Converts (13S,14R)-1,13-dihydroxy-N-methylcanadine to (13S,14R)-13-O-acetyl-1-hydroxy-N-methylcanadine. The sequence is that of (13S,14R)-1,13-dihydroxy-N-methylcanadine 13-O-acetyltransferase AT1 from Papaver somniferum (Opium poppy).